The sequence spans 383 residues: 8-amino-7-oxononanoate synthase (383 aa).

Substrate is bound at residue arginine 21. Pyridoxal 5'-phosphate is bound at residue 108–109; the sequence is GY. Residue histidine 133 coordinates substrate. Residues serine 179, histidine 207, and threonine 233 each coordinate pyridoxal 5'-phosphate. At lysine 236 the chain carries N6-(pyridoxal phosphate)lysine. Residue threonine 350 coordinates substrate.

The protein belongs to the class-II pyridoxal-phosphate-dependent aminotransferase family. BioF subfamily. As to quaternary structure, homodimer. The cofactor is pyridoxal 5'-phosphate.

The enzyme catalyses 6-carboxyhexanoyl-[ACP] + L-alanine + H(+) = (8S)-8-amino-7-oxononanoate + holo-[ACP] + CO2. Its pathway is cofactor biosynthesis; biotin biosynthesis. Functionally, catalyzes the decarboxylative condensation of pimeloyl-[acyl-carrier protein] and L-alanine to produce 8-amino-7-oxononanoate (AON), [acyl-carrier protein], and carbon dioxide. The sequence is that of 8-amino-7-oxononanoate synthase from Yersinia pseudotuberculosis serotype O:1b (strain IP 31758).